A 165-amino-acid chain; its full sequence is Small ribosomal subunit protein eS10 (165 aa).

Tyr12 carries the phosphotyrosine modification. Residues 92–165 (ATLRRSRPET…FGRGRGQPPQ (74 aa)) form a disordered region. Residues 97 to 128 (SRPETGRPRPKGLEGERPARLTRGEADRDTYR) are compositionally biased toward basic and acidic residues. Residues Lys138 and Lys139 each participate in a glycyl lysine isopeptide (Lys-Gly) (interchain with G-Cter in ubiquitin) cross-link. A Phosphoserine modification is found at Ser146. Arg153 bears the Omega-N-methylarginine mark. The span at 154-165 (GGFGRGRGQPPQ) shows a compositional bias: gly residues. 2 positions are modified to symmetric dimethylarginine: Arg158 and Arg160.

Belongs to the eukaryotic ribosomal protein eS10 family. As to quaternary structure, component of the small ribosomal subunit. The methylated form interacts with NPM1. In terms of processing, methylated by PRMT5. Methylation is necessary for its interaction with NPS1, its localization in the granular component (GC) region of the nucleolus, for the proper assembly of ribosomes, protein synthesis and optimal cell proliferation. Monoubiquitinated by ZNF598 when a ribosome has stalled during translation of poly(A) sequences, leading to preclude synthesis of a long poly-lysine tail and initiate the ribosome quality control (RQC) pathway to degrade the potentially detrimental aberrant nascent polypeptide. Deubiquitinated by OTUD3 and USP21, antagonizing ZNF598 activity. Deubiquitinated by OTUD1, antagonizing ZNF598 activity and stimulating formation of polysomes: deubiquitination by OTUD1 promotes stability and translation of a subset mRNAs with a high abundance of rare codons can limit the translation rate. Deubiquitinated by USP10.

It is found in the cytoplasm. It localises to the nucleus. The protein resides in the nucleolus. Component of the 40S ribosomal subunit. The ribosome is a large ribonucleoprotein complex responsible for the synthesis of proteins in the cell. In Oryctolagus cuniculus (Rabbit), this protein is Small ribosomal subunit protein eS10 (RPS10).